Consider the following 87-residue polypeptide: uncharacterized protein (87 aa).

A signal peptide spans M1–A19. The helical transmembrane segment at I51 to Y71 threads the bilayer.

To M.tuberculosis Rv0476.

It is found in the membrane. This is an uncharacterized protein from Mycobacterium leprae (strain TN).